A 280-amino-acid chain; its full sequence is 4-hydroxy-3-methylbut-2-enyl diphosphate reductase (280 aa).

C12 serves as a coordination point for [4Fe-4S] cluster. H40 and H72 together coordinate (2E)-4-hydroxy-3-methylbut-2-enyl diphosphate. Residues H40 and H72 each contribute to the dimethylallyl diphosphate site. Residues H40 and H72 each contribute to the isopentenyl diphosphate site. Residue C94 coordinates [4Fe-4S] cluster. H122 provides a ligand contact to (2E)-4-hydroxy-3-methylbut-2-enyl diphosphate. H122 provides a ligand contact to dimethylallyl diphosphate. H122 is an isopentenyl diphosphate binding site. E124 functions as the Proton donor in the catalytic mechanism. (2E)-4-hydroxy-3-methylbut-2-enyl diphosphate is bound at residue T160. C188 contributes to the [4Fe-4S] cluster binding site. (2E)-4-hydroxy-3-methylbut-2-enyl diphosphate contacts are provided by S216, N218, and S260. Dimethylallyl diphosphate is bound by residues S216, N218, and S260. S216, N218, and S260 together coordinate isopentenyl diphosphate.

Belongs to the IspH family. The cofactor is [4Fe-4S] cluster.

The catalysed reaction is isopentenyl diphosphate + 2 oxidized [2Fe-2S]-[ferredoxin] + H2O = (2E)-4-hydroxy-3-methylbut-2-enyl diphosphate + 2 reduced [2Fe-2S]-[ferredoxin] + 2 H(+). It carries out the reaction dimethylallyl diphosphate + 2 oxidized [2Fe-2S]-[ferredoxin] + H2O = (2E)-4-hydroxy-3-methylbut-2-enyl diphosphate + 2 reduced [2Fe-2S]-[ferredoxin] + 2 H(+). It functions in the pathway isoprenoid biosynthesis; dimethylallyl diphosphate biosynthesis; dimethylallyl diphosphate from (2E)-4-hydroxy-3-methylbutenyl diphosphate: step 1/1. The protein operates within isoprenoid biosynthesis; isopentenyl diphosphate biosynthesis via DXP pathway; isopentenyl diphosphate from 1-deoxy-D-xylulose 5-phosphate: step 6/6. In terms of biological role, catalyzes the conversion of 1-hydroxy-2-methyl-2-(E)-butenyl 4-diphosphate (HMBPP) into a mixture of isopentenyl diphosphate (IPP) and dimethylallyl diphosphate (DMAPP). Acts in the terminal step of the DOXP/MEP pathway for isoprenoid precursor biosynthesis. This Trichlorobacter lovleyi (strain ATCC BAA-1151 / DSM 17278 / SZ) (Geobacter lovleyi) protein is 4-hydroxy-3-methylbut-2-enyl diphosphate reductase.